The following is a 305-amino-acid chain: Pseudouridine-5'-phosphate glycosidase (305 aa).

Glu-28 functions as the Proton donor in the catalytic mechanism. Positions 89 and 109 each coordinate substrate. Asp-141 provides a ligand contact to Mn(2+). 143-145 (SAD) provides a ligand contact to substrate. Lys-162 functions as the Nucleophile in the catalytic mechanism.

It belongs to the pseudouridine-5'-phosphate glycosidase family. In terms of assembly, homotrimer. Requires Mn(2+) as cofactor.

The enzyme catalyses D-ribose 5-phosphate + uracil = psi-UMP + H2O. In terms of biological role, catalyzes the reversible cleavage of pseudouridine 5'-phosphate (PsiMP) to ribose 5-phosphate and uracil. Functions biologically in the cleavage direction, as part of a pseudouridine degradation pathway. This is Pseudouridine-5'-phosphate glycosidase from Dinoroseobacter shibae (strain DSM 16493 / NCIMB 14021 / DFL 12).